We begin with the raw amino-acid sequence, 427 residues long: MSSIVVVGTQWGDEGKGKITDFLAEQADVIARFSGGNNAGHTIKFGGETYKLHLVPSGIFYKEKLAVIGNGVVVDPVALLKELDALNERGISTDNLRISNRAQVILPYHIKQDEYEEERRGDNKIGTTKKGIGPAYVDKAQRIGIRVADLLDKETFEKLLKDNIEYKGAYFEGMFGKACPTFEEIFETYYAAGQRLAQFVTDTAKVLDDAFVADEKVLFEGAQGVMLDIDHGTYPFVTSSNPVAGNVTVGGGVGPTFVSKVIGVCKAYTSRVGDGPFPTELFDEDGHHIREVGREYGTTTGRPRRVGWFDSVVLRHSRRASGITDLSINSIDVLTGLKEVKICTAYELDGKEITEYPANLKDLQRCKPIFETLPGWTEDVTGCRSLEELPNNARRYLERISELCDVKISIFSVGPDRNQTNLLKSLW.

GTP is bound by residues 12 to 18 (GDEGKGK) and 40 to 42 (GHT). Aspartate 13 functions as the Proton acceptor in the catalytic mechanism. Residues aspartate 13 and glycine 40 each contribute to the Mg(2+) site. Residues 13 to 16 (DEGK), 38 to 41 (NAGH), threonine 128, arginine 142, glutamine 223, threonine 238, and arginine 302 each bind IMP. Catalysis depends on histidine 41, which acts as the Proton donor. 298-304 (TTTGRPR) is a substrate binding site. GTP contacts are provided by residues arginine 304, 330-332 (SID), and 412-414 (SVG).

The protein belongs to the adenylosuccinate synthetase family. Homodimer. Mg(2+) is required as a cofactor.

It localises to the cytoplasm. The enzyme catalyses IMP + L-aspartate + GTP = N(6)-(1,2-dicarboxyethyl)-AMP + GDP + phosphate + 2 H(+). The protein operates within purine metabolism; AMP biosynthesis via de novo pathway; AMP from IMP: step 1/2. Functionally, plays an important role in the de novo pathway of purine nucleotide biosynthesis. Catalyzes the first committed step in the biosynthesis of AMP from IMP. The protein is Adenylosuccinate synthetase of Staphylococcus saprophyticus subsp. saprophyticus (strain ATCC 15305 / DSM 20229 / NCIMB 8711 / NCTC 7292 / S-41).